We begin with the raw amino-acid sequence, 956 residues long: Valine--tRNA ligase (956 aa).

The short motif at P69 to H79 is the 'HIGH' region element. The short motif at K566–S570 is the 'KMSKS' region element. K569 provides a ligand contact to ATP. Positions L885–Q911 form a coiled coil.

Belongs to the class-I aminoacyl-tRNA synthetase family. ValS type 1 subfamily. Monomer.

The protein resides in the cytoplasm. It catalyses the reaction tRNA(Val) + L-valine + ATP = L-valyl-tRNA(Val) + AMP + diphosphate. Functionally, catalyzes the attachment of valine to tRNA(Val). As ValRS can inadvertently accommodate and process structurally similar amino acids such as threonine, to avoid such errors, it has a 'posttransfer' editing activity that hydrolyzes mischarged Thr-tRNA(Val) in a tRNA-dependent manner. The polypeptide is Valine--tRNA ligase (Treponema pallidum (strain Nichols)).